An 880-amino-acid chain; its full sequence is DNA mismatch repair protein MutS (880 aa).

625 to 632 (GPNMAGKS) serves as a coordination point for ATP.

It belongs to the DNA mismatch repair MutS family.

Its function is as follows. This protein is involved in the repair of mismatches in DNA. It is possible that it carries out the mismatch recognition step. This protein has a weak ATPase activity. The chain is DNA mismatch repair protein MutS from Alkaliphilus oremlandii (strain OhILAs) (Clostridium oremlandii (strain OhILAs)).